Here is a 375-residue protein sequence, read N- to C-terminus: Queuine tRNA-ribosyltransferase (375 aa).

Residue Asp-93 is the Proton acceptor of the active site. Residues 93–97, Asp-147, Gln-191, and Gly-218 each bind substrate; that span reads DSGGF. The RNA binding stretch occupies residues 249–255; it reads GVGTPLD. The active-site Nucleophile is Asp-268. The segment at 273–277 is RNA binding; important for wobble base 34 recognition; it reads TRNAR. Zn(2+)-binding residues include Cys-306, Cys-308, Cys-311, and His-337.

It belongs to the queuine tRNA-ribosyltransferase family. As to quaternary structure, homodimer. Within each dimer, one monomer is responsible for RNA recognition and catalysis, while the other monomer binds to the replacement base PreQ1. Zn(2+) serves as cofactor.

It carries out the reaction 7-aminomethyl-7-carbaguanine + guanosine(34) in tRNA = 7-aminomethyl-7-carbaguanosine(34) in tRNA + guanine. The protein operates within tRNA modification; tRNA-queuosine biosynthesis. In terms of biological role, catalyzes the base-exchange of a guanine (G) residue with the queuine precursor 7-aminomethyl-7-deazaguanine (PreQ1) at position 34 (anticodon wobble position) in tRNAs with GU(N) anticodons (tRNA-Asp, -Asn, -His and -Tyr). Catalysis occurs through a double-displacement mechanism. The nucleophile active site attacks the C1' of nucleotide 34 to detach the guanine base from the RNA, forming a covalent enzyme-RNA intermediate. The proton acceptor active site deprotonates the incoming PreQ1, allowing a nucleophilic attack on the C1' of the ribose to form the product. After dissociation, two additional enzymatic reactions on the tRNA convert PreQ1 to queuine (Q), resulting in the hypermodified nucleoside queuosine (7-(((4,5-cis-dihydroxy-2-cyclopenten-1-yl)amino)methyl)-7-deazaguanosine). The protein is Queuine tRNA-ribosyltransferase of Nitratidesulfovibrio vulgaris (strain DP4) (Desulfovibrio vulgaris).